The sequence spans 613 residues: MAEGGAGFSSSSTSSEEAVPWSTQQPMGWEELESLGDGGGSTSADEEFQWEAMFVKSRAGSPTAEDKSRTFTLPRGRPKNEPRPERGKGKTPKKPKKPDQGATLLVGEEPRPRLGSRTRSKSRSRDKHQLPDDIYDVPNPPMLAPVDSYGNPVEQVSSSESDFEDIANIRPILRRQQPVTVKHRREPSPEPLGHPTFVHRYDKPSYDEEVCQKKDKGGRTKSKNWLRQPGVKSKLTSMKDLSGSFKSLMHIRSDGEKHKQQQRPGGSGAPGGATPRDVFNTFLGSGTCPSFKNAFFLYLEGSMGVGKTTLIRHMREINGDNVISFVEPMFYWREVYSDCVKLIYSACKPFNLGKMSTSNKVLSAQMKFMTPMKCLQTSVRRYVKANEPLQEKTAMDNWLLFDRHPLSATLVFPYLSLKNGYLAFEHFLALAANFTAHEGDIIALLCMGEEDNLKMVKLRNRKGESGVTSAHLKDLGQAFHACYCTWLLLKYLSPEDMVSVCCCDVTLNDICIMRSMSSSKVTMAKSLFNKSMFPTLMDVIQPFRSNCTIIEICLTLFMELKKVEFIVVNASEFIGDIPGVWTSIYTQSLRTQAIKTQSIDWSGLRAFSLTYNS.

2 disordered regions span residues 1-233 (MAEG…GVKS) and 253-276 (SDGE…ATPR). Positions 8-18 (FSSSSTSSEEA) are enriched in low complexity. A compositionally biased stretch (basic and acidic residues) spans 78-88 (PKNEPRPERGK). Basic residues predominate over residues 114-126 (LGSRTRSKSRSRD). Residues 199-218 (HRYDKPSYDEEVCQKKDKGG) show a composition bias toward basic and acidic residues. 301–308 (GSMGVGKT) lines the ATP pocket. The Proton acceptor role is filled by E327. Residues Y344, Q365, and R461 each contribute to the substrate site.

It belongs to the herpesviridae thymidine kinase family. As to quaternary structure, homodimer.

It carries out the reaction thymidine + ATP = dTMP + ADP + H(+). Functionally, catalyzes the transfer of the gamma-phospho group of ATP to thymidine to generate dTMP in the salvage pathway of pyrimidine synthesis. The dTMP serves as a substrate for DNA polymerase during viral DNA replication. Allows the virus to be reactivated and to grow in non-proliferative cells lacking a high concentration of phosphorylated nucleic acid precursors. This chain is Thymidine kinase, found in Equine herpesvirus 2 (strain 86/87) (EHV-2).